Here is a 123-residue protein sequence, read N- to C-terminus: Small ribosomal subunit protein uS12 (123 aa).

Asp89 is subject to 3-methylthioaspartic acid.

Belongs to the universal ribosomal protein uS12 family. Part of the 30S ribosomal subunit. Contacts proteins S8 and S17. May interact with IF1 in the 30S initiation complex.

Functionally, with S4 and S5 plays an important role in translational accuracy. Interacts with and stabilizes bases of the 16S rRNA that are involved in tRNA selection in the A site and with the mRNA backbone. Located at the interface of the 30S and 50S subunits, it traverses the body of the 30S subunit contacting proteins on the other side and probably holding the rRNA structure together. The combined cluster of proteins S8, S12 and S17 appears to hold together the shoulder and platform of the 30S subunit. The polypeptide is Small ribosomal subunit protein uS12 (Gluconacetobacter diazotrophicus (strain ATCC 49037 / DSM 5601 / CCUG 37298 / CIP 103539 / LMG 7603 / PAl5)).